The primary structure comprises 204 residues: Thymidylate kinase (204 aa).

9–16 (GLDGAGKS) contributes to the ATP binding site.

The protein belongs to the thymidylate kinase family.

The catalysed reaction is dTMP + ATP = dTDP + ADP. In terms of biological role, phosphorylation of dTMP to form dTDP in both de novo and salvage pathways of dTTP synthesis. In Francisella philomiragia subsp. philomiragia (strain ATCC 25017 / CCUG 19701 / FSC 153 / O#319-036), this protein is Thymidylate kinase.